Here is a 345-residue protein sequence, read N- to C-terminus: MLLLGLLLLTSALAGQRTGTRAESNLSSKLQLSSDKEQNGVQDPRHERVVTISGNGSIHSPKFPHTYPRNTVLVWRLVAVDENVRIQLTFDERFGLEDPEDDLCKYDFVEVEEPSDGSVLGRWCGSGTVPGKQTSKGNHIRIRFVSDEYFPSEPGFCIHYSIIMPQVTETTSPSVLPPSALSLDLLNNAVTAFSTVEELIRFLEPDRWQIDLDSLYKPTWPLLGKAFLYGKKSKAVNLNLLKEEVKLYSCTPRNFSVSIREELKRTDTIFWPGCLLVKRCGGNCACCLHNCNECQCVPRKVTKKYHEVLQLRPKIGVKGLHKSLTDVALEHHEECDCVCRGNTEG.

The signal sequence occupies residues 1 to 22 (MLLLGLLLLTSALAGQRTGTRA). Positions 24–33 (SNLSSKLQLS) are enriched in polar residues. Positions 24–45 (SNLSSKLQLSSDKEQNGVQDPR) are disordered. N-linked (GlcNAc...) asparagine glycosylation occurs at Asn25. Over residues 34–45 (SDKEQNGVQDPR) the composition is skewed to basic and acidic residues. One can recognise a CUB domain in the interval 46–163 (HERVVTISGN…PGFCIHYSII (118 aa)). N-linked (GlcNAc...) asparagine glycosylation occurs at Asn55. 4 cysteine pairs are disulfide-bonded: Cys104-Cys124, Cys250-Cys294, Cys280-Cys335, and Cys287-Cys337.

It belongs to the PDGF/VEGF growth factor family. In terms of assembly, homodimer; disulfide-linked. Interacts with PDGFRA homodimers, and with heterodimers formed by PDGFRA and PDGFRB. Interacts (via CUB domain) with PLAT (via kringle domain). Post-translationally, proteolytic removal of the N-terminal CUB domain releasing the core domain is necessary for unmasking the receptor-binding epitopes of the core domain. Cleavage after basic residues in the hinge region (region connecting the CUB and growth factor domains) gives rise to the receptor-binding form. Cleaved by PLAT and PLG. Sumoylated with SUMO1. In terms of processing, N-glycosylated. As to expression, highly expressed in the kidney and adrenal gland. In the kidney, it is expressed in arteriolar smooth muscle cells and in epithelial cells of individual segments (at protein level).

Its subcellular location is the cytoplasm. The protein localises to the cytosol. It is found in the secreted. The protein resides in the nucleus. It localises to the cytoplasmic granule. Its subcellular location is the cell membrane. In terms of biological role, growth factor that plays an essential role in the regulation of embryonic development, cell proliferation, cell migration, survival and chemotaxis. Potent mitogen and chemoattractant for cells of mesenchymal origin. Required for normal skeleton formation during embryonic development, especially for normal development of the craniofacial skeleton and for normal development of the palate. Required for normal skin morphogenesis during embryonic development. Plays an important role in wound healing, where it appears to be involved in three stages: inflammation, proliferation and remodeling. Plays an important role in angiogenesis and blood vessel development. Involved in fibrotic processes, in which transformation of interstitial fibroblasts into myofibroblasts plus collagen deposition occurs. The CUB domain has mitogenic activity in coronary artery smooth muscle cells, suggesting a role beyond the maintenance of the latency of the PDGF domain. In the nucleus, PDGFC seems to have additional function. This is Platelet-derived growth factor C (Pdgfc) from Rattus norvegicus (Rat).